The chain runs to 814 residues: Outer membrane usher protein SefC (814 aa).

Positions 1 to 30 (MKKTTITLFVLTSVFHSGNVFSRQYNFDYG) are cleaved as a signal peptide. C792 and C813 are joined by a disulfide.

This sequence belongs to the fimbrial export usher family.

The protein resides in the cell outer membrane. In terms of biological role, involved in the export and assembly of the SefA fimbrial subunit. The protein is Outer membrane usher protein SefC (sefC) of Salmonella enteritidis.